The sequence spans 393 residues: Stearoyl-[acyl-carrier-protein] 9-desaturase, chloroplastic (393 aa).

A chloroplast-targeting transit peptide spans 1 to 31 (MASMVAFRPEAFLCFSPPKTTRSTRSPRISM). Fe cation is bound by residues glutamate 135, glutamate 173, histidine 176, glutamate 226, glutamate 259, and histidine 262.

The protein belongs to the fatty acid desaturase type 2 family. Homodimer. Fe(2+) serves as cofactor.

Its subcellular location is the plastid. The protein resides in the chloroplast. The catalysed reaction is octadecanoyl-[ACP] + 2 reduced [2Fe-2S]-[ferredoxin] + O2 + 2 H(+) = (9Z)-octadecenoyl-[ACP] + 2 oxidized [2Fe-2S]-[ferredoxin] + 2 H2O. It functions in the pathway lipid metabolism; fatty acid metabolism. Converts stearoyl-ACP to oleoyl-ACP by introduction of a cis double bond between carbons 9 and 10 of the acyl chain. The polypeptide is Stearoyl-[acyl-carrier-protein] 9-desaturase, chloroplastic (Elaeis guineensis var. tenera (Oil palm)).